A 62-amino-acid polypeptide reads, in one-letter code: Large ribosomal subunit protein uL30 (62 aa).

It belongs to the universal ribosomal protein uL30 family. As to quaternary structure, part of the 50S ribosomal subunit.

In Heliobacterium modesticaldum (strain ATCC 51547 / Ice1), this protein is Large ribosomal subunit protein uL30.